The following is a 431-amino-acid chain: Chaperone SurA (431 aa).

A signal peptide spans 1–20; it reads MKNWRTFILGLALCANGALA. PpiC domains lie at 171 to 272 and 282 to 382; these read GAEF…KVND and VTEV…QLID.

Its subcellular location is the periplasm. It catalyses the reaction [protein]-peptidylproline (omega=180) = [protein]-peptidylproline (omega=0). Its function is as follows. Chaperone involved in the correct folding and assembly of outer membrane proteins. Recognizes specific patterns of aromatic residues and the orientation of their side chains, which are found more frequently in integral outer membrane proteins. May act in both early periplasmic and late outer membrane-associated steps of protein maturation. This is Chaperone SurA from Sodalis glossinidius (strain morsitans).